A 281-amino-acid polypeptide reads, in one-letter code: Putative zinc-binding protein ORF11 (281 aa).

The polypeptide is Putative zinc-binding protein ORF11 (ORF11) (Ictaluridae (bullhead catfishes)).